The sequence spans 148 residues: D-aminoacyl-tRNA deacylase (148 aa).

The short motif at 136-137 (GP) is the Gly-cisPro motif, important for rejection of L-amino acids element.

This sequence belongs to the DTD family. In terms of assembly, homodimer.

The protein localises to the cytoplasm. It carries out the reaction glycyl-tRNA(Ala) + H2O = tRNA(Ala) + glycine + H(+). The enzyme catalyses a D-aminoacyl-tRNA + H2O = a tRNA + a D-alpha-amino acid + H(+). Functionally, an aminoacyl-tRNA editing enzyme that deacylates mischarged D-aminoacyl-tRNAs. Also deacylates mischarged glycyl-tRNA(Ala), protecting cells against glycine mischarging by AlaRS. Acts via tRNA-based rather than protein-based catalysis; rejects L-amino acids rather than detecting D-amino acids in the active site. By recycling D-aminoacyl-tRNA to D-amino acids and free tRNA molecules, this enzyme counteracts the toxicity associated with the formation of D-aminoacyl-tRNA entities in vivo and helps enforce protein L-homochirality. This Streptococcus mutans serotype c (strain ATCC 700610 / UA159) protein is D-aminoacyl-tRNA deacylase.